The chain runs to 409 residues: FAD-dependent monooxygenase phnB (409 aa).

The FAD site is built by glutamate 35, alanine 50, arginine 110, and aspartate 311.

It belongs to the paxM FAD-dependent monooxygenase family. The cofactor is FAD.

It catalyses the reaction 3,6,7,9-tetrahydroxy-3-methyl-2,3-dihydro-1H-naphtho[2,1-b]pyran-1-one + NADPH + O2 + H(+) = 2,3,4,7,9-pentahydroxy-6-methyl-1H-phenalen-1-one + NADP(+) + 2 H2O. The protein operates within secondary metabolite biosynthesis. FAD-dependent monooxygenase; part of the gene cluster that mediates the biosynthesis of phenalenones such as herqueinone, compounds that have been reported to treat tumors, bacterial infections and/or mycoses, and rheumatic diseases. The non-reducing polyketide synthase phnA synthesizes the heptaketide backbone and cyclizes it into the angular, hemiketal-containing naphtho-gamma-pyrone prephenalenone. The product template (PT) domain of phnA catalyzes only the C4-C9 aldol condensation, which is unprecedented among known PT domains. The transformation of prephenalenone to phenalenones requires an FAD-dependent monooxygenase phnB, which catalyzes the C2 aromatic hydroxylation of prephenalenone and ring opening of the gamma-pyrone ring simultaneously. Subsequent intramolecular deprotonation of C3 phenolic oxygen accelerates phenalenone ring closure to yield the tricyclic phenalenone core with a C2 hydroxylation. The prenyltransferase phnF further catalyzes reverse C-prenylation of phenalenone by direct electrophilic substitution at C6, or possibly via first a forward O-prenylation of a neighboring phenol in phenalenone, followed by a Claisen rearrangement. The hydroalkoxylation enzyme phnH catalyzes the 5-exo-trig cyclization via acid catalysis after the spontaneous deprotonation of 7-OH, which leads to the formation of the dihydrobenzofuran atrovenetin. Atrovenetin is further converted to deoxyherqueinone by the O-methyltransferase phnC which can methylate C2-OH to stabilize the northern portion of the phenalenone core. Finally, the oxidoreductase phnG converts deoxyherqueinone to herqueinone via C6 hydroxylation. The polypeptide is FAD-dependent monooxygenase phnB (Penicillium herquei).